The following is a 135-amino-acid chain: Small ribosomal subunit protein bS6 (135 aa).

Residues 98-135 (EASPMAKAKDERDARRAAISERSSEADEVEENAEESAE) are disordered. The segment covering 104–122 (KAKDERDARRAAISERSSE) has biased composition (basic and acidic residues). Over residues 123–135 (ADEVEENAEESAE) the composition is skewed to acidic residues.

The protein belongs to the bacterial ribosomal protein bS6 family.

Functionally, binds together with bS18 to 16S ribosomal RNA. The sequence is that of Small ribosomal subunit protein bS6 from Shewanella amazonensis (strain ATCC BAA-1098 / SB2B).